The chain runs to 571 residues: Urease subunit alpha (571 aa).

The Urease domain occupies 132–571 (GGIDSHIHFI…LPMAQRYFLF (440 aa)). Positions 137, 139, and 220 each coordinate Ni(2+). Position 220 is an N6-carboxylysine (lysine 220). Histidine 222 serves as a coordination point for substrate. 2 residues coordinate Ni(2+): histidine 249 and histidine 275. Residue histidine 323 is the Proton donor of the active site. Aspartate 363 is a Ni(2+) binding site.

This sequence belongs to the metallo-dependent hydrolases superfamily. Urease alpha subunit family. As to quaternary structure, heterotrimer of UreA (gamma), UreB (beta) and UreC (alpha) subunits. Three heterotrimers associate to form the active enzyme. Requires Ni cation as cofactor. Post-translationally, carboxylation allows a single lysine to coordinate two nickel ions.

It localises to the cytoplasm. The catalysed reaction is urea + 2 H2O + H(+) = hydrogencarbonate + 2 NH4(+). It participates in nitrogen metabolism; urea degradation; CO(2) and NH(3) from urea (urease route): step 1/1. The sequence is that of Urease subunit alpha from Kocuria rhizophila (strain ATCC 9341 / DSM 348 / NBRC 103217 / DC2201).